We begin with the raw amino-acid sequence, 98 residues long: Aspartyl/glutamyl-tRNA(Asn/Gln) amidotransferase subunit C (98 aa).

Residues 70–98 (PSLTPEQALSGAPAQEQQRFKVPQILGED) are disordered.

Belongs to the GatC family. In terms of assembly, heterotrimer of A, B and C subunits.

It carries out the reaction L-glutamyl-tRNA(Gln) + L-glutamine + ATP + H2O = L-glutaminyl-tRNA(Gln) + L-glutamate + ADP + phosphate + H(+). It catalyses the reaction L-aspartyl-tRNA(Asn) + L-glutamine + ATP + H2O = L-asparaginyl-tRNA(Asn) + L-glutamate + ADP + phosphate + 2 H(+). Functionally, allows the formation of correctly charged Asn-tRNA(Asn) or Gln-tRNA(Gln) through the transamidation of misacylated Asp-tRNA(Asn) or Glu-tRNA(Gln) in organisms which lack either or both of asparaginyl-tRNA or glutaminyl-tRNA synthetases. The reaction takes place in the presence of glutamine and ATP through an activated phospho-Asp-tRNA(Asn) or phospho-Glu-tRNA(Gln). This Streptomyces avermitilis (strain ATCC 31267 / DSM 46492 / JCM 5070 / NBRC 14893 / NCIMB 12804 / NRRL 8165 / MA-4680) protein is Aspartyl/glutamyl-tRNA(Asn/Gln) amidotransferase subunit C.